Here is a 719-residue protein sequence, read N- to C-terminus: Anaphase-promoting complex subunit 4 (719 aa).

The stretch at 57-96 (NSQRIWDVDFHDLEATELCWNHDGNLIVVGFKNGELKIID) is one WD repeat.

The APC/C is composed of at least 13 subunits: apc1, apc2, nuc2, apc4, apc5, cut9, apc8, apc10, apc11, hcn1, apc13, apc14 and apc15. Interacts with apc1 and dim1.

Component of the anaphase-promoting complex/cyclosome (APC/C), a cell cycle-regulated E3 ubiquitin-protein ligase complex that controls progression through mitosis and the G1 phase of the cell cycle. The APC/C is thought to confer substrate specificity and, in the presence of ubiquitin-conjugating E2 enzymes, it catalyzes the formation of protein-ubiquitin conjugates that are subsequently degraded by the 26S proteasome. Has a role in promoting metaphase to anaphase transition via the ubiquitination of specific mitotic substrates. This Schizosaccharomyces pombe (strain 972 / ATCC 24843) (Fission yeast) protein is Anaphase-promoting complex subunit 4 (cut20).